Consider the following 195-residue polypeptide: MEIIKSNIANLPSRFGKFQIKSYKEGCCKEHLTIFSPNLDVTKTVNVRIHSECLTGDAIGSLKCDCRDQLEASLKYINKHGGMVIYLRQEGRNIGLLNKVNAYALQDNGLDTIEANHQLGFKADERTYEIVDFILKDFGIKSINLLTNNPLKLASLTCVNIEKRIPIEIESNEFNKDYLKVKKEQMGHMLDEFTR.

48–52 (RIHSE) provides a ligand contact to GTP. Zn(2+) contacts are provided by cysteine 53, cysteine 64, and cysteine 66. Residues glutamine 69, 90 to 92 (EGR), and threonine 112 contribute to the GTP site. The Proton acceptor role is filled by aspartate 124. Arginine 126 functions as the Nucleophile in the catalytic mechanism. The GTP site is built by threonine 147 and lysine 152.

Belongs to the GTP cyclohydrolase II family. Requires Zn(2+) as cofactor.

The catalysed reaction is GTP + 4 H2O = 2,5-diamino-6-hydroxy-4-(5-phosphoribosylamino)-pyrimidine + formate + 2 phosphate + 3 H(+). It participates in cofactor biosynthesis; riboflavin biosynthesis; 5-amino-6-(D-ribitylamino)uracil from GTP: step 1/4. Catalyzes the conversion of GTP to 2,5-diamino-6-ribosylamino-4(3H)-pyrimidinone 5'-phosphate (DARP), formate and pyrophosphate. This is GTP cyclohydrolase-2 from Campylobacter fetus subsp. fetus (strain 82-40).